A 422-amino-acid polypeptide reads, in one-letter code: Dihydroorotase (422 aa).

Zn(2+) contacts are provided by His59 and His61. Substrate is bound by residues 61–63 (HFR) and Asn93. Residues Asp150, His177, and His230 each coordinate Zn(2+). Asn276 contributes to the substrate binding site. Asp303 is a Zn(2+) binding site. Residue Asp303 is part of the active site. His307 serves as a coordination point for substrate.

Belongs to the metallo-dependent hydrolases superfamily. DHOase family. Class I DHOase subfamily. Zn(2+) serves as cofactor.

It catalyses the reaction (S)-dihydroorotate + H2O = N-carbamoyl-L-aspartate + H(+). The protein operates within pyrimidine metabolism; UMP biosynthesis via de novo pathway; (S)-dihydroorotate from bicarbonate: step 3/3. Catalyzes the reversible cyclization of carbamoyl aspartate to dihydroorotate. The chain is Dihydroorotase from Streptococcus pneumoniae serotype 4 (strain ATCC BAA-334 / TIGR4).